A 145-amino-acid chain; its full sequence is uncharacterized protein (145 aa).

Belongs to the SAP18 family.

Its subcellular location is the cytoplasm. It is found in the nucleus. This is an uncharacterized protein from Schizosaccharomyces pombe (strain 972 / ATCC 24843) (Fission yeast).